We begin with the raw amino-acid sequence, 825 residues long: AMP deaminase 2 (825 aa).

The disordered stretch occupies residues 1–49 (MASYPSGSGKPKAKYPFKKRASLQASTAAPEARGGLGAPPLQSARSLPG). The segment covering 11-21 (PKAKYPFKKRA) has biased composition (basic residues). S22 is subject to Phosphoserine. R45 bears the Omega-N-methylarginine mark. Residues S46, S64, and S80 each carry the phosphoserine modification. Y91 is modified (phosphotyrosine). Phosphoserine is present on residues S97 and S114. T134 carries the phosphothreonine modification. A phosphoserine mark is found at S136 and S138. Zn(2+) contacts are provided by H364 and H366. Residues H366 and 435-440 (KFNAKY) contribute to the substrate site. H633 contacts Zn(2+). Position 636 (E636) interacts with substrate. The Proton acceptor role is filled by H655. D710 lines the Zn(2+) pocket. Residue 711–714 (DPLQ) coordinates substrate.

Belongs to the metallo-dependent hydrolases superfamily. Adenosine and AMP deaminases family. As to quaternary structure, homotetramer. Zn(2+) is required as a cofactor. Highly expressed in cerebellum.

It carries out the reaction AMP + H2O + H(+) = IMP + NH4(+). The protein operates within purine metabolism; IMP biosynthesis via salvage pathway; IMP from AMP: step 1/1. AMP deaminase plays a critical role in energy metabolism. Catalyzes the deamination of AMP to IMP and plays an important role in the purine nucleotide cycle. The protein is AMP deaminase 2 of Homo sapiens (Human).